We begin with the raw amino-acid sequence, 142 residues long: Immunity protein WapI (142 aa).

In terms of biological role, immunity protein component of a toxin-immunity protein module, which functions as a cellular contact-dependent growth inhibition (CDI) system. Neutralizes the tRNase activity of cognate toxin WapA upon expression in E.coli. Does not inhibit WapA from other strains of B.subtilis. The WapA C-terminus cannot be expressed on its own in E.coli, however it can be cloned in the presence of its cognate immunity protein gene. Cell contact is necessary for growth inhibition. Unlike the LXG toxin-immunity modules, WapAI mediates competition under shaking culture conditions. This chain is Immunity protein WapI (wapI), found in Bacillus subtilis (strain 168).